We begin with the raw amino-acid sequence, 200 residues long: Glycerol-3-phosphate acyltransferase (200 aa).

The next 5 helical transmembrane spans lie at 2–22, 51–71, 84–104, 114–134, and 159–179; these read FNIP…AVIV, KAAA…VLLA, AIAA…FFGF, LGVL…IWLV, and FFMP…LVLF.

This sequence belongs to the PlsY family. As to quaternary structure, probably interacts with PlsX.

The protein localises to the cell inner membrane. The catalysed reaction is an acyl phosphate + sn-glycerol 3-phosphate = a 1-acyl-sn-glycero-3-phosphate + phosphate. Its pathway is lipid metabolism; phospholipid metabolism. Functionally, catalyzes the transfer of an acyl group from acyl-phosphate (acyl-PO(4)) to glycerol-3-phosphate (G3P) to form lysophosphatidic acid (LPA). This enzyme utilizes acyl-phosphate as fatty acyl donor, but not acyl-CoA or acyl-ACP. The polypeptide is Glycerol-3-phosphate acyltransferase (Neisseria meningitidis serogroup B (strain ATCC BAA-335 / MC58)).